A 392-amino-acid chain; its full sequence is 8-amino-7-oxononanoate synthase (392 aa).

Arg-21 contacts substrate. 108 to 109 (GF) is a binding site for pyridoxal 5'-phosphate. Position 133 (His-133) interacts with substrate. Pyridoxal 5'-phosphate contacts are provided by residues Ser-181, 206–209 (DDAH), and 237–240 (TLSK). Lys-240 carries the post-translational modification N6-(pyridoxal phosphate)lysine. Substrate is bound at residue Thr-354.

The protein belongs to the class-II pyridoxal-phosphate-dependent aminotransferase family. BioF subfamily. Homodimer. It depends on pyridoxal 5'-phosphate as a cofactor.

The catalysed reaction is 6-carboxyhexanoyl-[ACP] + L-alanine + H(+) = (8S)-8-amino-7-oxononanoate + holo-[ACP] + CO2. It functions in the pathway cofactor biosynthesis; biotin biosynthesis. Its function is as follows. Catalyzes the decarboxylative condensation of pimeloyl-[acyl-carrier protein] and L-alanine to produce 8-amino-7-oxononanoate (AON), [acyl-carrier protein], and carbon dioxide. In Symbiobacterium thermophilum (strain DSM 24528 / JCM 14929 / IAM 14863 / T), this protein is 8-amino-7-oxononanoate synthase.